Here is a 200-residue protein sequence, read N- to C-terminus: Late embryogenesis abundant protein 19 (200 aa).

Disordered regions lie at residues 1–158 and 172–200; these read MASH…KSTV and TEDK…ARDH. 5 stretches are compositionally biased toward basic and acidic residues: residues 13-23, 30-42, 53-81, 88-97, and 105-114; these read GETKAHTEEKA, SKDK…DRAS, QDTK…KDKT, ARDKAAESKD, and EKTEQAKQKA. The stretch at 52–81 forms a coiled coil; the sequence is GQDTKEATKEKAQAAKERASETAQAAKDKT. Low complexity predominate over residues 115-130; that stretch reads AETAGAAKQKTAETAQ. Over residues 145-156 the composition is skewed to polar residues; the sequence is SVLQQASEQVKS. Positions 172–183 are enriched in basic and acidic residues; it reads TEDKAGTDDGAN. Residues 186–200 are compositionally biased toward low complexity; that stretch reads TSATAAATETTARDH.

The protein belongs to the LEA type 4 family. As to expression, expressed in the shoot apex and leaves.

Its function is as follows. Involved in response to drought stress. The protein is Late embryogenesis abundant protein 19 of Oryza sativa subsp. indica (Rice).